A 200-amino-acid polypeptide reads, in one-letter code: A-type ATP synthase subunit E 3 (200 aa).

This sequence belongs to the V-ATPase E subunit family. As to quaternary structure, has multiple subunits with at least A(3), B(3), C, D, E, F, H, I and proteolipid K(x).

It is found in the cell membrane. Its function is as follows. Component of the A-type ATP synthase that produces ATP from ADP in the presence of a proton gradient across the membrane. The sequence is that of A-type ATP synthase subunit E 3 from Methanospirillum hungatei JF-1 (strain ATCC 27890 / DSM 864 / NBRC 100397 / JF-1).